Reading from the N-terminus, the 956-residue chain is Translation initiation factor IF-2 (956 aa).

The interval 33 to 370 (SHASSVEEAD…PVTERKFHEL (338 aa)) is disordered. Residues 46 to 60 (IASSFSAGVTKNVQA) show a composition bias toward polar residues. Over residues 63-73 (AKDKQVAEQKA) the composition is skewed to basic and acidic residues. The segment covering 76 to 100 (AKATTPQPAASKAAEKPAAATQEAS) has biased composition (low complexity). Basic and acidic residues-rich tracts occupy residues 112 to 125 (FKAE…EQVA), 134 to 143 (SNDRKSDYRQ), and 179 to 192 (NDGH…DKNR). Residues 199–213 (RQQDTGRQGQTQAGA) are compositionally biased toward low complexity. Basic and acidic residues-rich tracts occupy residues 234 to 258 (ARQR…RQEA) and 266 to 276 (QTEDKKHREAS). A compositionally biased stretch (low complexity) spans 277-293 (AKATESVASMAAASVAK). Residues 303–320 (NRPDKGHDRDHGLEDGQK) are compositionally biased toward basic and acidic residues. Over residues 325 to 343 (SWNSQNQVRNQKNSNWNNN) the composition is skewed to low complexity. Residues 344 to 354 (KKNKKGKHHKN) show a composition bias toward basic residues. The region spanning 457-626 (ERAPVVTIMG…LLVAEVEELK (170 aa)) is the tr-type G domain. A G1 region spans residues 466–473 (GHVDHGKT). GTP is bound at residue 466–473 (GHVDHGKT). The G2 stretch occupies residues 491-495 (GITQH). A G3 region spans residues 512 to 515 (DTPG). GTP is bound by residues 512 to 516 (DTPGH) and 566 to 569 (NKID). The G4 stretch occupies residues 566–569 (NKID). The interval 602–604 (SAK) is G5.

It belongs to the TRAFAC class translation factor GTPase superfamily. Classic translation factor GTPase family. IF-2 subfamily.

It localises to the cytoplasm. One of the essential components for the initiation of protein synthesis. Protects formylmethionyl-tRNA from spontaneous hydrolysis and promotes its binding to the 30S ribosomal subunits. Also involved in the hydrolysis of GTP during the formation of the 70S ribosomal complex. This Streptococcus equi subsp. equi (strain 4047) protein is Translation initiation factor IF-2.